The primary structure comprises 179 residues: Chymotrypsin inhibitor ECI (179 aa).

Glutamine 1 carries the post-translational modification Pyrrolidone carboxylic acid. 2 disulfides stabilise this stretch: cysteine 40–cysteine 84 and cysteine 134–cysteine 143.

It belongs to the protease inhibitor I3 (leguminous Kunitz-type inhibitor) family.

Its function is as follows. Inhibition of chymotrypsin. In Erythrina variegata (Indian coral tree), this protein is Chymotrypsin inhibitor ECI.